We begin with the raw amino-acid sequence, 441 residues long: UDP-N-acetylglucosamine--peptide N-acetylglucosaminyltransferase stabilizing protein GtfB (441 aa).

Belongs to the GtfB family. In terms of assembly, forms a heterotetramer with 2 subunits each of GtfA and GtfB. Part of the accessory SecA2/SecY2 protein translocation apparatus.

It is found in the cell membrane. Its pathway is protein modification; protein glycosylation. Its function is as follows. Required for polymorphic O-glycosylation of the serine-rich repeat protein (SRRP) in this bacteria. A stabilizing protein that is part of the accessory SecA2/SecY2 system specifically required to export serine-rich repeat cell wall proteins encoded in the same operon. The GtfA-GtfB complex adds GlcNAc from UDP-GlcNAc to the substrate protein, attaching the first sugar residue. Stabilizes the glycosylation activity of GtfA. Has no N-acetylglucosaminyl transferase activity on its own. This Limosilactobacillus reuteri subsp. suis (strain ATCC 53608 / LMG 31752 / 1063) (Lactobacillus reuteri) protein is UDP-N-acetylglucosamine--peptide N-acetylglucosaminyltransferase stabilizing protein GtfB.